A 147-amino-acid chain; its full sequence is Large ribosomal subunit protein uL23A (147 aa).

Positions 1-10 (MAPSAPAKTA) are enriched in low complexity. A disordered region spans residues 1 to 29 (MAPSAPAKTAKALDAKKKVVKGKRTTHRR). Over residues 18–29 (KVVKGKRTTHRR) the composition is skewed to basic residues.

The protein belongs to the universal ribosomal protein uL23 family.

In terms of biological role, this protein binds to a specific region on the 26S rRNA. In Caenorhabditis elegans, this protein is Large ribosomal subunit protein uL23A.